A 586-amino-acid chain; its full sequence is Merlin (586 aa).

Position 9 is a phosphoserine (S9). In terms of domain architecture, FERM spans 18–307; the sequence is FTVRIVTMDA…GNHDLFMRRR (290 aa). The disordered stretch occupies residues 325-354; the sequence is KARKQMERQRLAREKQMREEAERSRDEPER. S514 is subject to Phosphoserine; by PAK. The segment at 557 to 586 is disordered; sequence LHSEHSDSGTSSKHNTIKKPQAQGRRPICI.

Interacts with NHERF1, HGS and AGAP2. Interacts with SGSM3. Interacts (via FERM domain) with MPP1. Interacts with LAYN and WWC1. Interacts with the CUL4A-RBX1-DDB1-VprBP/DCAF1 E3 ubiquitin-protein ligase complex. The unphosphorylated form interacts (via FERM domain) with VPRBP/DCAF1. Interacts (via FERM domain) with NOP53; the interaction is direct. Interacts with SCHIP1; the interaction is direct. Post-translationally, ubiquitinated by the CUL4A-RBX1-DDB1-DCAF1/VprBP E3 ubiquitin-protein ligase complex for ubiquitination and subsequent proteasome-dependent degradation. In terms of processing, phosphorylation of Ser-514 inhibits nuclear localization by disrupting the intramolecular association of the FERM domain with the C-terminal tail. The dephosphorylation of Ser-514 favors the interaction with NOP53.

It localises to the cell membrane. The protein localises to the cell projection. Its subcellular location is the cytoplasm. The protein resides in the cytoskeleton. It is found in the nucleus. In terms of biological role, probable regulator of the Hippo/SWH (Sav/Wts/Hpo) signaling pathway, a signaling pathway that plays a pivotal role in tumor suppression by restricting proliferation and promoting apoptosis. Along with WWC1 can synergistically induce the phosphorylation of LATS1 and LATS2 and can probably function in the regulation of the Hippo/SWH (Sav/Wts/Hpo) signaling pathway. May act as a membrane stabilizing protein. May inhibit PI3 kinase by binding to AGAP2 and impairing its stimulating activity. Suppresses cell proliferation and tumorigenesis by inhibiting the CUL4A-RBX1-DDB1-VprBP/DCAF1 E3 ubiquitin-protein ligase complex Plays a role in lens development and is required for complete fiber cell terminal differentiation, maintenance of cell polarity and separation of the lens vesicle from the corneal epithelium. This is Merlin (Nf2) from Rattus norvegicus (Rat).